A 555-amino-acid polypeptide reads, in one-letter code: MATNRAKSSTKYIFVTGGVASSLGKGLTAASLGQLLSSRGLRVTMQKLDPYLNVDPGTMNPFEHGEVFVTEDGAETDLDLGHYERFLDRNLSAAGNVTTGKVYSNVIAKERRGEFLGKTVQVIPHITDEIKSAVLAMGQPDKNGQAPDVVISEIGGTVGDIESQPFLEAIRQVRHEAGRENIAFIHVSLVPYLAPSGELKTKPTQHSVAELRSIGIVPDAIVLRADREVPQAMKSKIALMCDVDEDGVVSCPDAPSIYDIPKVLHSQHLDNYIIRRLNLPFRDVDWTTWGNLLESVHNPQGEVTIGIVGKYIDLPDAYLSVAEAIRAGGFGANVRANVKWVASDECETEKGAAEALKDVDGVVIPGGFGNRGIEGKIGAITYARKNKLPLLGICLGLQCIVIEAARTAGLTDASSTEFDANASTPVISTMEEQKAAVSGEADLGGTMRLGAYPARLAEGSLVAEMYGATDVSERHRHRYEVNNAYREQITEGSGLQFSGTSPDGTLVEFVEYPKDVHPYFVATQAHPEYKSRPTRSHPLFQGLVDAALKHQAGRS.

Residues Met-1–Leu-279 are amidoligase domain. Ser-21 is a binding site for CTP. UTP is bound at residue Ser-21. Residues Ser-22 to Leu-27 and Asp-79 each bind ATP. 2 residues coordinate Mg(2+): Asp-79 and Glu-153. Residues Asp-160–Glu-162, Lys-200–Gln-205, and Lys-236 each bind CTP. UTP contacts are provided by residues Lys-200–Gln-205 and Lys-236. Positions Thr-304 to Gly-553 constitute a Glutamine amidotransferase type-1 domain. Gly-367 contacts L-glutamine. Cys-394 acts as the Nucleophile; for glutamine hydrolysis in catalysis. L-glutamine-binding positions include Leu-395–Gln-398, Glu-417, and Arg-478. Residues His-526 and Glu-528 contribute to the active site.

This sequence belongs to the CTP synthase family. As to quaternary structure, homotetramer.

It catalyses the reaction UTP + L-glutamine + ATP + H2O = CTP + L-glutamate + ADP + phosphate + 2 H(+). The catalysed reaction is L-glutamine + H2O = L-glutamate + NH4(+). The enzyme catalyses UTP + NH4(+) + ATP = CTP + ADP + phosphate + 2 H(+). The protein operates within pyrimidine metabolism; CTP biosynthesis via de novo pathway; CTP from UDP: step 2/2. Allosterically activated by GTP, when glutamine is the substrate; GTP has no effect on the reaction when ammonia is the substrate. The allosteric effector GTP functions by stabilizing the protein conformation that binds the tetrahedral intermediate(s) formed during glutamine hydrolysis. Inhibited by the product CTP, via allosteric rather than competitive inhibition. Functionally, catalyzes the ATP-dependent amination of UTP to CTP with either L-glutamine or ammonia as the source of nitrogen. Regulates intracellular CTP levels through interactions with the four ribonucleotide triphosphates. This chain is CTP synthase, found in Corynebacterium jeikeium (strain K411).